Here is a 225-residue protein sequence, read N- to C-terminus: Putative ATP-dependent Clp protease proteolytic subunit-like (225 aa).

Belongs to the peptidase S14 family.

Functionally, has lost the two conserved residues (Ser and His) proposed to be part of the active site. Therefore it could be inactive. The polypeptide is Putative ATP-dependent Clp protease proteolytic subunit-like (clpR) (Synechocystis sp. (strain ATCC 27184 / PCC 6803 / Kazusa)).